The chain runs to 334 residues: MKATTTAVALLVAAAAMAAQVVAEQCGSQAGGALCPNCLCCSSYGWCGSTSDYCGDGCQSQCDGCGGGGGGGGGGGGGGGGGGGAVEAVVSKELFEQLLLHRNDAACPARGFYTYDALVTAAAAFPDFAATGDDEARKREVAAFLGQTSHETTGGWATAPDGPYSWGYCFKEEIGATASYCVPSAEWPCAPDKKYFGRGPIQLSYNYNYGPAGEAIGEDLLNNPELVASDPVVSFKTALWFWMTPQSPKPSCHDVITGQWTPSSGDIAAGRVPGYGVITNIINGGLECGFGPDDRVANRIGFYQRYCDVLGIGYGSNLDCYDQRPFNSGLTAAQ.

Positions 1–23 are cleaved as a signal peptide; the sequence is MKATTTAVALLVAAAAMAAQVVA. In terms of domain architecture, Chitin-binding type-1 spans 24–64; it reads EQCGSQAGGALCPNCLCCSSYGWCGSTSDYCGDGCQSQCDG. 8 disulfide bridges follow: Cys-26-Cys-41, Cys-35-Cys-47, Cys-38-Cys-65, Cys-40-Cys-54, Cys-58-Cys-62, Cys-107-Cys-169, Cys-181-Cys-189, and Cys-288-Cys-320. The active-site Proton donor is Glu-151.

The protein belongs to the glycosyl hydrolase 19 family. Chitinase class I subfamily. In terms of tissue distribution, expressed at high levels in roots, sheaths and meristems.

It carries out the reaction Random endo-hydrolysis of N-acetyl-beta-D-glucosaminide (1-&gt;4)-beta-linkages in chitin and chitodextrins.. Functionally, may play a role in defense against fungal pathogens containing chitin. The sequence is that of Chitinase 9 (Cht9) from Oryza sativa subsp. japonica (Rice).